Here is a 115-residue protein sequence, read N- to C-terminus: Macrophage migration inhibitory factor (115 aa).

P2 (proton acceptor; via imino nitrogen) is an active-site residue. The substrate site is built by K33 and I65. K78 carries the N6-acetyllysine; alternate modification. K78 is subject to N6-succinyllysine; alternate. Position 98 (N98) interacts with substrate.

This sequence belongs to the MIF family. In terms of assembly, homotrimer. Interacts with CXCR2 extracellular domain. Interacts with the CD74 extracellular domain, USO1, COPS5 and BNIPL.

The protein localises to the secreted. It is found in the cytoplasm. It catalyses the reaction 3-phenylpyruvate = enol-phenylpyruvate. The catalysed reaction is L-dopachrome = 5,6-dihydroxyindole-2-carboxylate. Its function is as follows. Pro-inflammatory cytokine involved in the innate immune response to bacterial pathogens. The expression of MIF at sites of inflammation suggests a role as mediator in regulating the function of macrophages in host defense. Counteracts the anti-inflammatory activity of glucocorticoids. Has phenylpyruvate tautomerase and dopachrome tautomerase activity (in vitro), but the physiological substrate is not known. It is not clear whether the tautomerase activity has any physiological relevance, and whether it is important for cytokine activity. This Homo sapiens (Human) protein is Macrophage migration inhibitory factor.